Consider the following 287-residue polypeptide: Chlorophyll a-b binding protein CP29.2, chloroplastic (287 aa).

The N-terminal 31 residues, 1–31 (MAATSTAAAASSIMGTRVVSDISSNSSRFTA), are a transit peptide targeting the chloroplast. Arg-32 carries the N2-acetylarginine modification. At Thr-37 the chain carries Phosphothreonine. Chlorophyll b is bound at residue Trp-55. Phe-75 serves as a coordination point for chlorophyll a. Phosphothreonine is present on residues Thr-109 and Thr-111. The chlorophyll a site is built by Glu-137 and His-140. A helical transmembrane segment spans residues 143-163 (WAMLATLGAITVEWLTGVTWQ). Leu-177 contacts chlorophyll a. A helical transmembrane segment spans residues 181-201 (LPFSISTLIWIEVLVIGYIEF). The chlorophyll b site is built by Glu-200 and Arg-203. Residues Glu-239, His-242, Arg-244, Gln-256, and His-271 each coordinate chlorophyll a. The chain crosses the membrane as a helical span at residues 245–265 (LAMVGFLGFAVQAAATGKGPL).

The protein belongs to the light-harvesting chlorophyll a/b-binding (LHC) protein family. As to quaternary structure, the LHC complex consists of chlorophyll a-b binding proteins. Binds at least 14 chlorophylls (8 Chl-a and 6 Chl-b) and carotenoids such as lutein and neoxanthin. is required as a cofactor. Post-translationally, photoregulated by reversible phosphorylation of its threonine residues.

Its subcellular location is the plastid. The protein resides in the chloroplast thylakoid membrane. Functionally, the light-harvesting complex (LHC) functions as a light receptor, it captures and delivers excitation energy to photosystems with which it is closely associated. This is Chlorophyll a-b binding protein CP29.2, chloroplastic (LHCB4.2) from Arabidopsis thaliana (Mouse-ear cress).